Reading from the N-terminus, the 351-residue chain is MGKGGALSESVIKNIVLSYSYVAIWIFLSFTVIVYNKYILDKKMYNWPFPISLTMIHMSFCSTLAFLIIKVFKFVEPVKMTRETYLRSVVPIGALYALSLWLSNSAYIYLSVSFIQMLKALMPVAVYSIGVLFKKEGFKSDTMMNMLSISFGVAIAAYGEARFDVWGVILQLGAVAFEATRLVLIQILLGDKGIKLNPITSLYYVAPCCLAFLFIPWIYVEFPVLRDTSSFHLDYAIFGANSFCAFALNLAVFLLVGKTSALTMNVAGVVKDWLLIAFSWSVIKDTVTPINLFGYGIAFLGVAYYNHAKLQALKAKEEEKKKIQQADEESGRLLEEREGDVEGKKNDQSGN.

The next 10 helical transmembrane spans lie at 15–35, 49–69, 89–109, 113–133, 141–161, 165–185, 205–225, 236–256, 263–283, and 286–306; these read IVLS…VIVY, FPIS…FLII, VVPI…AYIY, SFIQ…GVLF, DTMM…YGEA, VWGV…LVLI, VAPC…FPVL, AIFG…FLLV, TMNV…WSVI, and TVTP…AYYN. Residues 38–156 form the EamA domain; it reads YILDKKMYNW…LSISFGVAIA (119 aa). Positions 321–351 are disordered; it reads KKIQQADEESGRLLEEREGDVEGKKNDQSGN.

Belongs to the TPT transporter family. TPT (TC 2.A.7.9) subfamily.

The protein localises to the membrane. This Arabidopsis thaliana (Mouse-ear cress) protein is Probable sugar phosphate/phosphate translocator At5g11230.